The sequence spans 321 residues: Coproporphyrin III ferrochelatase (321 aa).

Fe(2+) is bound by residues His-185 and Glu-267.

The protein belongs to the ferrochelatase family.

It is found in the cytoplasm. It carries out the reaction Fe-coproporphyrin III + 2 H(+) = coproporphyrin III + Fe(2+). Its pathway is porphyrin-containing compound metabolism; protoheme biosynthesis. Functionally, involved in coproporphyrin-dependent heme b biosynthesis. Catalyzes the insertion of ferrous iron into coproporphyrin III to form Fe-coproporphyrin III. The sequence is that of Coproporphyrin III ferrochelatase from Lacticaseibacillus casei (strain BL23) (Lactobacillus casei).